The chain runs to 382 residues: Anhydro-N-acetylmuramic acid kinase (382 aa).

An ATP-binding site is contributed by 9–16 (GTSLDGID).

It belongs to the anhydro-N-acetylmuramic acid kinase family.

The enzyme catalyses 1,6-anhydro-N-acetyl-beta-muramate + ATP + H2O = N-acetyl-D-muramate 6-phosphate + ADP + H(+). Its pathway is amino-sugar metabolism; 1,6-anhydro-N-acetylmuramate degradation. It participates in cell wall biogenesis; peptidoglycan recycling. Catalyzes the specific phosphorylation of 1,6-anhydro-N-acetylmuramic acid (anhMurNAc) with the simultaneous cleavage of the 1,6-anhydro ring, generating MurNAc-6-P. Is required for the utilization of anhMurNAc either imported from the medium or derived from its own cell wall murein, and thus plays a role in cell wall recycling. The sequence is that of Anhydro-N-acetylmuramic acid kinase from Bacillus cereus (strain G9842).